The sequence spans 700 residues: Mitogen-activated protein kinase 9 (700 aa).

The Protein kinase domain maps to Tyr107 to Phe398. Residues Ile113–Val121 and Lys136 contribute to the ATP site. Asp233 serves as the catalytic Proton acceptor. Thr269 bears the Phosphothreonine mark. The TXY motif lies at Thr269–Tyr271. At Tyr271 the chain carries Phosphotyrosine. The tract at residues Glu475–Asp523 is disordered.

This sequence belongs to the protein kinase superfamily. CMGC Ser/Thr protein kinase family. MAP kinase subfamily. Dually phosphorylated on Thr-269 and Tyr-271, which activates the enzyme.

The enzyme catalyses L-seryl-[protein] + ATP = O-phospho-L-seryl-[protein] + ADP + H(+). The catalysed reaction is L-threonyl-[protein] + ATP = O-phospho-L-threonyl-[protein] + ADP + H(+). With respect to regulation, activated by threonine and tyrosine phosphorylation. This Oryza sativa subsp. japonica (Rice) protein is Mitogen-activated protein kinase 9 (MPK9).